A 132-amino-acid polypeptide reads, in one-letter code: Female-specific protein 800 (132 aa).

Functionally, FS800 is likely to have some function in the production or maintenance of the schistosome egg. It may have a function unrelated to eggshell formation. The polypeptide is Female-specific protein 800 (Schistosoma mansoni (Blood fluke)).